The sequence spans 72 residues: Translation initiation factor IF-1 (72 aa).

An S1-like domain is found at methionine 1–lysine 72.

Belongs to the IF-1 family. Component of the 30S ribosomal translation pre-initiation complex which assembles on the 30S ribosome in the order IF-2 and IF-3, IF-1 and N-formylmethionyl-tRNA(fMet); mRNA recruitment can occur at any time during PIC assembly.

It localises to the cytoplasm. One of the essential components for the initiation of protein synthesis. Stabilizes the binding of IF-2 and IF-3 on the 30S subunit to which N-formylmethionyl-tRNA(fMet) subsequently binds. Helps modulate mRNA selection, yielding the 30S pre-initiation complex (PIC). Upon addition of the 50S ribosomal subunit IF-1, IF-2 and IF-3 are released leaving the mature 70S translation initiation complex. This chain is Translation initiation factor IF-1, found in Hyphomonas neptunium (strain ATCC 15444).